The sequence spans 351 residues: RCC1 repeat-containing protein C10F6.04 (351 aa).

4 RCC1 repeats span residues 1 to 48 (MLLS…LLDE), 50 to 106 (SQLW…IVHA), 108 to 162 (RRRV…CVTN), and 163 to 212 (EGNL…VLQE).

The protein resides in the cytoplasm. It localises to the nucleus. The chain is RCC1 repeat-containing protein C10F6.04 from Schizosaccharomyces pombe (strain 972 / ATCC 24843) (Fission yeast).